The chain runs to 442 residues: tRNA modification GTPase MnmE (442 aa).

(6S)-5-formyl-5,6,7,8-tetrahydrofolate contacts are provided by R27, E84, and K124. Residues G221 to A366 form the TrmE-type G domain. Residues N231–S236, T250–T256, D275–G278, and N329–D332 each bind GTP. Mg(2+) is bound by residues S235 and T256. K442 contributes to the (6S)-5-formyl-5,6,7,8-tetrahydrofolate binding site.

The protein belongs to the TRAFAC class TrmE-Era-EngA-EngB-Septin-like GTPase superfamily. TrmE GTPase family. As to quaternary structure, homodimer. Heterotetramer of two MnmE and two MnmG subunits. K(+) is required as a cofactor.

It is found in the cytoplasm. Exhibits a very high intrinsic GTPase hydrolysis rate. Involved in the addition of a carboxymethylaminomethyl (cmnm) group at the wobble position (U34) of certain tRNAs, forming tRNA-cmnm(5)s(2)U34. This chain is tRNA modification GTPase MnmE, found in Chelativorans sp. (strain BNC1).